The primary structure comprises 243 residues: Ribonuclease 3 (243 aa).

The region spanning 10 to 146 is the RNase III domain; that stretch reads VNRFRKRFDT…FIGALYLDQG (137 aa). Residue Glu-59 coordinates Mg(2+). Asp-63 is a catalytic residue. The Mg(2+) site is built by Asp-132 and Glu-135. Residue Glu-135 is part of the active site. The 70-residue stretch at 172-241 folds into the DRBM domain; it reads DFKTQFQEYV…AESAYKQLKQ (70 aa). The segment covering 219–231 has biased composition (basic and acidic residues); that stretch reads GKGKTKKESEQRA. Residues 219–243 are disordered; it reads GKGKTKKESEQRAAESAYKQLKQIK.

Belongs to the ribonuclease III family. As to quaternary structure, homodimer. Requires Mg(2+) as cofactor.

The protein localises to the cytoplasm. It catalyses the reaction Endonucleolytic cleavage to 5'-phosphomonoester.. Digests double-stranded RNA. Involved in the processing of primary rRNA transcript to yield the immediate precursors to the large and small rRNAs (23S and 16S). Processes some mRNAs, and tRNAs when they are encoded in the rRNA operon. Processes pre-crRNA and tracrRNA of type II CRISPR loci if present in the organism. This chain is Ribonuclease 3, found in Staphylococcus aureus (strain USA300).